The primary structure comprises 491 residues: 3-epi-6-deoxocathasterone 23-monooxygenase CYP90D1 (491 aa).

The chain crosses the membrane as a helical span at residues 7 to 27 (LLFFSFFFFIIIVIFNKINGL). Heme is bound at residue Cys442.

This sequence belongs to the cytochrome P450 family. It depends on heme as a cofactor. In terms of tissue distribution, expressed in leaf vascular tissue.

Its subcellular location is the endoplasmic reticulum membrane. The enzyme catalyses 3-epi-6-deoxocathasterone + reduced [NADPH--hemoprotein reductase] + O2 = 6-deoxotyphasterol + oxidized [NADPH--hemoprotein reductase] + H2O + H(+). The catalysed reaction is (22S,24R)-22-hydroxy-5alpha-ergostan-3-one + reduced [NADPH--hemoprotein reductase] + O2 = 3-dehydro-6-deoxoteasterone + oxidized [NADPH--hemoprotein reductase] + H2O + H(+). Its pathway is plant hormone biosynthesis; brassinosteroid biosynthesis. In terms of biological role, involved in brassinosteroid (BR) biosynthesis. May convert teasterone (TE) to 3-dehydroteasterone (3DT, 3-DHT), or 6-deoxoteasterone (6-deoxoTE) to 3-dehydro-6-deoxoteasterone (6-deoxo3DT, 6-deoxo3DHT). C-23 hydroxylase that converts directly (22S,24R)-22-hydroxy-5-alpha-ergostan-3-one and 3-epi-6-deoxocathasterone to 3-dehydro-6-deoxoteasterone (6-deoxo3DT, 6-deoxo3DHT) and 6-deoxotyphasterol (6-deoxoTY), respectively. These C-23 hydroxylation shortcuts bypass campestanol, 6-deoxocathasterone, and 6-deoxoteasterone (6-deoxoTE). Also catalyzes the conversion of cathasterone to teasterone (TE), 6-deoxotyphasterol (6-deoxoTY) to 6-deoxocathasterone (6-deoxoCT), (22S,24R)-22-hydroxyergost-4-en-3-one (22-OH-4-en-3-one) to (22R,23R)-22,23-dihydroxy-campest-4-en-3-one (22,23-diOH-4-en-3-one) and (22S)-22-hydroxycampesterol (22-OHCR) to (22R,23R)-22,23-dihydroxycampesterol (22,23-diOHCR). The polypeptide is 3-epi-6-deoxocathasterone 23-monooxygenase CYP90D1 (Arabidopsis thaliana (Mouse-ear cress)).